A 71-amino-acid chain; its full sequence is Prokaryotic ubiquitin-like protein Pup (71 aa).

The segment at 1-30 is disordered; it reads MPSASGHHQIPAETQRHDDDQTQETAQGLS. Positions 23–56 form a coiled coil; the sequence is QETAQGLSAAAMLAQEQADDLDAILDDIETVLET. An ARC ATPase binding region spans residues 27 to 65; it reads QGLSAAAMLAQEQADDLDAILDDIETVLETNAEEYVSSF. Residue E71 forms an Isoglutamyl lysine isopeptide (Glu-Lys) (interchain with K-? in acceptor proteins) linkage.

The protein belongs to the prokaryotic ubiquitin-like protein family. Strongly interacts with the proteasome-associated ATPase ARC through a hydrophobic interface; the interacting region of Pup lies in its C-terminal half. There is one Pup binding site per ARC hexamer ring.

The protein operates within protein degradation; proteasomal Pup-dependent pathway. Its function is as follows. Protein modifier that is covalently attached to lysine residues of substrate proteins, thereby targeting them for proteasomal degradation. The tagging system is termed pupylation. The polypeptide is Prokaryotic ubiquitin-like protein Pup (Bifidobacterium animalis subsp. lactis (strain AD011)).